Consider the following 178-residue polypeptide: Interleukin-10 (178 aa).

The first 18 residues, 1–18 (MHSSALLCCLVFLTGVRA), serve as a signal peptide directing secretion. 2 disulfides stabilise this stretch: Cys-30–Cys-126 and Cys-80–Cys-132. An N-linked (GlcNAc...) asparagine glycan is attached at Asn-134.

Belongs to the IL-10 family. Homodimer. Interacts with IL10RA and IL10RB.

Its subcellular location is the secreted. Major immune regulatory cytokine that acts on many cells of the immune system where it has profound anti-inflammatory functions, limiting excessive tissue disruption caused by inflammation. Mechanistically, IL10 binds to its heterotetrameric receptor comprising IL10RA and IL10RB leading to JAK1 and STAT2-mediated phosphorylation of STAT3. In turn, STAT3 translocates to the nucleus where it drives expression of anti-inflammatory mediators. Targets antigen-presenting cells (APCs) such as macrophages and monocytes and inhibits their release of pro-inflammatory cytokines including granulocyte-macrophage colony-stimulating factor /GM-CSF, granulocyte colony-stimulating factor/G-CSF, IL-1 alpha, IL-1 beta, IL-6, IL-8 and TNF-alpha. Also interferes with antigen presentation by reducing the expression of MHC-class II and co-stimulatory molecules, thereby inhibiting their ability to induce T cell activation. In addition, controls the inflammatory response of macrophages by reprogramming essential metabolic pathways including mTOR signaling. The sequence is that of Interleukin-10 (IL10) from Callithrix jacchus (White-tufted-ear marmoset).